The primary structure comprises 247 residues: MRILLSNDDGYFAPGIANLAKILSDIADVTVVAPERDRSGASNSLTLDRPLSLHKSHNGFYYVNGTPTDCVHLAVTGMLDELPDMVISGINDGANMGDDTVYSGTVAAATEGFLLGLPSIAVSLVSMSRGNFPTAAKIVLDLVKRFIDNKFHVPILLNVNVPDLPYEELQGIEVTRLGRRHKAEPVIKYQTPRGETVYWVGAAGAAQDASEGTDFHALQNNRVSITPLQIDLTRYDQIGYVKNWLVF.

The a divalent metal cation site is built by Asp8, Asp9, Ser39, and Asn91.

The protein belongs to the SurE nucleotidase family. A divalent metal cation serves as cofactor.

It localises to the cytoplasm. It carries out the reaction a ribonucleoside 5'-phosphate + H2O = a ribonucleoside + phosphate. Nucleotidase that shows phosphatase activity on nucleoside 5'-monophosphates. The chain is 5'-nucleotidase SurE from Nitrosomonas eutropha (strain DSM 101675 / C91 / Nm57).